The following is a 523-amino-acid chain: MSQQVIIFDTTLRDGEQALQASLSAKEKLQIALALERMGVDVMEVGFPVSSPGDFESVQTIARTIKNSRVCALARCVEKDIDVAAQALKVADAFRIHTFIATSPMHIATKLRSTLDEVIERAVYMVKRARNYTDDVEFSCEDAGRTPVDDLARVVEAAINAGARTINIPDTVGYTMPFEFAGIISGLYERVPNIDKAIISVHTHDDLGIAVGNSLAAVHAGARQVEGAMNGIGERAGNCALEEVIMAIKVRKDIMNVHTNINHHEIWRTSQTVSQICNMPIPANKAIVGSGAFAHSSGIHQDGVLKNRENYEIMTPESIGLNQIQLNLTSRSGRAAVKHRMEEMGYKDTDYNMDHLYDAFLKLADKKGQVFDYDLEALAFINKQQEEPEHFRLDYFSVQSGSSDIATASVKLACGEEIKAEAANGNGPVDAIYQAINRITGYDVELVKYDLNAKGQGKDALGQVDIVVNHHGRRFHGVGLATDIVESSAKAMMHVLNNIWRAAEVEKELQRKAQNKENNKETV.

The 263-residue stretch at 5–267 (VIIFDTTLRD…HTNINHHEIW (263 aa)) folds into the Pyruvate carboxyltransferase domain. Residues D14, H202, H204, and N238 each coordinate Mn(2+). The regulatory domain stretch occupies residues 392-523 (RLDYFSVQSG…QNKENNKETV (132 aa)).

It belongs to the alpha-IPM synthase/homocitrate synthase family. LeuA type 1 subfamily. Homodimer. Mn(2+) is required as a cofactor.

The protein resides in the cytoplasm. It carries out the reaction 3-methyl-2-oxobutanoate + acetyl-CoA + H2O = (2S)-2-isopropylmalate + CoA + H(+). Its pathway is amino-acid biosynthesis; L-leucine biosynthesis; L-leucine from 3-methyl-2-oxobutanoate: step 1/4. Functionally, catalyzes the condensation of the acetyl group of acetyl-CoA with 3-methyl-2-oxobutanoate (2-ketoisovalerate) to form 3-carboxy-3-hydroxy-4-methylpentanoate (2-isopropylmalate). In Salmonella paratyphi A (strain ATCC 9150 / SARB42), this protein is 2-isopropylmalate synthase.